Here is a 141-residue protein sequence, read N- to C-terminus: Neuropeptides CP2 (141 aa).

The first 26 residues, 1–26, serve as a signal peptide directing secretion; the sequence is MDSRICTSFARLMASALCVSTLLVTA. A disordered region spans residues 75–94; that stretch reads KVDMPLPRQRTSSRSSERWA. Residue H140 is modified to Histidine amide.

As to expression, neurons.

It localises to the secreted. Mediates intrinsic neuromodulation. In Aplysia californica (California sea hare), this protein is Neuropeptides CP2 (CP2PP).